Consider the following 334-residue polypeptide: Phosphate acyltransferase (334 aa).

This sequence belongs to the PlsX family. As to quaternary structure, homodimer. Probably interacts with PlsY.

It localises to the cytoplasm. It catalyses the reaction a fatty acyl-[ACP] + phosphate = an acyl phosphate + holo-[ACP]. It participates in lipid metabolism; phospholipid metabolism. In terms of biological role, catalyzes the reversible formation of acyl-phosphate (acyl-PO(4)) from acyl-[acyl-carrier-protein] (acyl-ACP). This enzyme utilizes acyl-ACP as fatty acyl donor, but not acyl-CoA. This Desulfitobacterium hafniense (strain DSM 10664 / DCB-2) protein is Phosphate acyltransferase.